The primary structure comprises 295 residues: Protease Rv3090 (295 aa).

Transmembrane regions (helical) follow at residues 2–22 (TWQI…ALFW) and 37–57 (VTIA…FTIV).

It is found in the cell membrane. The protein localises to the secreted. The protein resides in the cell wall. Functionally, protease that triggers late cell apoptosis and contributes to the pathogenicity and dissemination of M.tuberculosis. In a mouse model of infection, can induce hepatocyte and lung cell apoptosis and cause pathological damage to the spleen, liver and lungs. Specifically stimulates the secretion of inflammatory cytokines including TNF-alpha, IL-6 and IL-1 beta. Can degrade casein in vitro. This Mycobacterium tuberculosis (strain ATCC 25618 / H37Rv) protein is Protease Rv3090.